We begin with the raw amino-acid sequence, 530 residues long: Na(+)/H(+) antiporter NhaB (530 aa).

12 consecutive transmembrane segments (helical) span residues 13–33 (FLGKAPDWYKIAILSFLVINP), 34–54 (LVFFFVDPFTAGWLLVVEFIF), 90–110 (LVANIEVLLLLVFMVAGIYFM), 121–141 (ILIGIKSKTALSVAFCFTAAF), 145–165 (FLDALTVIAVVISVAVGFYAI), 205–225 (LLIHAGVGTALGGVMTMVGEP), 241–261 (FIIRMLPITAPVFICGILTCI), 306–326 (GLIAVWLIVGLALHLAAVGLI), 327–347 (GLSVIILATAFTGVIEEHSMG), 351–371 (EEALPFTALLAVFFAVVAVII), 455–475 (GQAAFLFLLTSALAPLIQLSY), and 481–501 (MALPYTIVLALVGMFGIIFFL).

The protein belongs to the NhaB Na(+)/H(+) (TC 2.A.34) antiporter family.

It localises to the cell inner membrane. It catalyses the reaction 2 Na(+)(in) + 3 H(+)(out) = 2 Na(+)(out) + 3 H(+)(in). In terms of biological role, na(+)/H(+) antiporter that extrudes sodium in exchange for external protons. The polypeptide is Na(+)/H(+) antiporter NhaB (Aliivibrio fischeri (strain MJ11) (Vibrio fischeri)).